Here is a 348-residue protein sequence, read N- to C-terminus: Fe(3+) ions import ATP-binding protein FbpC (348 aa).

The ABC transporter domain maps to 6 to 236 (LSLEGATVRF…PADAFVARFL (231 aa)). 38 to 45 (GPSGSGKS) is an ATP binding site.

The protein belongs to the ABC transporter superfamily. Fe(3+) ion importer (TC 3.A.1.10) family. In terms of assembly, the complex is composed of two ATP-binding proteins (FbpC), two transmembrane proteins (FbpB) and a solute-binding protein (FbpA).

The protein localises to the cell membrane. It carries out the reaction Fe(3+)(out) + ATP + H2O = Fe(3+)(in) + ADP + phosphate + H(+). Functionally, part of the ABC transporter complex FbpABC involved in Fe(3+) ions import. Responsible for energy coupling to the transport system. The chain is Fe(3+) ions import ATP-binding protein FbpC from Streptomyces coelicolor (strain ATCC BAA-471 / A3(2) / M145).